The primary structure comprises 54 residues: U-reduvitoxin-Pr7a (54 aa).

Residues 1–23 (MDFLRILLFVLACIMALFTSAIA) form the signal peptide. 3 disulfides stabilise this stretch: C26-C41, C33-C46, and C40-C53.

This sequence belongs to the venom Ptu1-like knottin family. In terms of tissue distribution, expressed by the venom gland.

It localises to the secreted. Its function is as follows. Binds reversibly and blocks P/Q-type voltage-gated calcium channels (Cav). In Platymeris rhadamanthus (Red spot assassin bug), this protein is U-reduvitoxin-Pr7a.